A 1065-amino-acid chain; its full sequence is Probable importin-7 homolog (1065 aa).

The Importin N-terminal domain maps to Ala-25–His-98. Residues Glu-958 to Glu-996 are disordered. The span at Leu-963–Glu-996 shows a compositional bias: acidic residues.

It belongs to the importin beta family.

It localises to the cytoplasm. The protein resides in the nucleus. In terms of biological role, may function in nuclear protein import. This Dictyostelium discoideum (Social amoeba) protein is Probable importin-7 homolog.